The sequence spans 338 residues: Ketol-acid reductoisomerase (NADP(+)) (338 aa).

Residues 1–181 form the KARI N-terminal Rossmann domain; sequence MKVYYDKDAD…GGTKGGVIET (181 aa). Residues 24–27, R47, and S52 contribute to the NADP(+) site; that span reads YGSQ. Residue H107 is part of the active site. An NADP(+)-binding site is contributed by G133. One can recognise a KARI C-terminal knotted domain in the interval 182–327; it reads NFKEETETDL…GQLRDMMPWI (146 aa). Residues D190, E194, E226, and E230 each contribute to the Mg(2+) site. S251 contacts substrate.

It belongs to the ketol-acid reductoisomerase family. Mg(2+) is required as a cofactor.

The enzyme catalyses (2R)-2,3-dihydroxy-3-methylbutanoate + NADP(+) = (2S)-2-acetolactate + NADPH + H(+). The catalysed reaction is (2R,3R)-2,3-dihydroxy-3-methylpentanoate + NADP(+) = (S)-2-ethyl-2-hydroxy-3-oxobutanoate + NADPH + H(+). Its pathway is amino-acid biosynthesis; L-isoleucine biosynthesis; L-isoleucine from 2-oxobutanoate: step 2/4. It functions in the pathway amino-acid biosynthesis; L-valine biosynthesis; L-valine from pyruvate: step 2/4. Functionally, involved in the biosynthesis of branched-chain amino acids (BCAA). Catalyzes an alkyl-migration followed by a ketol-acid reduction of (S)-2-acetolactate (S2AL) to yield (R)-2,3-dihydroxy-isovalerate. In the isomerase reaction, S2AL is rearranged via a Mg-dependent methyl migration to produce 3-hydroxy-3-methyl-2-ketobutyrate (HMKB). In the reductase reaction, this 2-ketoacid undergoes a metal-dependent reduction by NADPH to yield (R)-2,3-dihydroxy-isovalerate. This is Ketol-acid reductoisomerase (NADP(+)) from Azoarcus sp. (strain BH72).